The sequence spans 336 residues: Phospho-N-acetylmuramoyl-pentapeptide-transferase (336 aa).

10 helical membrane passes run 3-23 (LTLI…PYFI), 53-73 (GGTV…LFSI), 78-98 (SLAL…IGFL), 118-138 (LALQ…PSGI), 143-163 (VFGY…FWVV), 174-194 (GIDG…GVIA), 200-220 (FDVL…FCFN), 226-246 (VFMG…ISIA), 251-271 (WTLL…MLQV), and 316-336 (AFLW…LYVF).

It belongs to the glycosyltransferase 4 family. MraY subfamily. It depends on Mg(2+) as a cofactor.

It localises to the cell membrane. The catalysed reaction is UDP-N-acetyl-alpha-D-muramoyl-L-alanyl-gamma-D-glutamyl-L-lysyl-D-alanyl-D-alanine + di-trans,octa-cis-undecaprenyl phosphate = Mur2Ac(oyl-L-Ala-gamma-D-Glu-L-Lys-D-Ala-D-Ala)-di-trans,octa-cis-undecaprenyl diphosphate + UMP. Its pathway is cell wall biogenesis; peptidoglycan biosynthesis. Functionally, catalyzes the initial step of the lipid cycle reactions in the biosynthesis of the cell wall peptidoglycan: transfers peptidoglycan precursor phospho-MurNAc-pentapeptide from UDP-MurNAc-pentapeptide onto the lipid carrier undecaprenyl phosphate, yielding undecaprenyl-pyrophosphoryl-MurNAc-pentapeptide, known as lipid I. This chain is Phospho-N-acetylmuramoyl-pentapeptide-transferase, found in Streptococcus pyogenes serotype M49 (strain NZ131).